A 331-amino-acid polypeptide reads, in one-letter code: Probable zinc-binding oxidoreductase, mitochondrial (331 aa).

The span at 1 to 29 shows a compositional bias: polar residues; the sequence is MASVTSVPKTGRSVNQDVPATTLTLQTRP. Residues 1-34 are disordered; the sequence is MASVTSVPKTGRSVNQDVPATTLTLQTRPTPAPN.

Belongs to the zinc-containing alcohol dehydrogenase family. Quinone oxidoreductase subfamily.

It localises to the mitochondrion. The protein is Probable zinc-binding oxidoreductase, mitochondrial of Arthroderma benhamiae (strain ATCC MYA-4681 / CBS 112371) (Trichophyton mentagrophytes).